A 239-amino-acid polypeptide reads, in one-letter code: Cysteine-rich venom protein 2 (239 aa).

The signal sequence occupies residues 1–19; that stretch reads MIALIVLPILAAVLQQSSG. Residues 38–166 form the SCP domain; the sequence is VDLHNSLRRS…EYSYFYVCQY (129 aa). Intrachain disulfides connect cysteine 75–cysteine 153, cysteine 92–cysteine 167, cysteine 148–cysteine 164, cysteine 186–cysteine 193, cysteine 189–cysteine 198, cysteine 202–cysteine 234, and cysteine 219–cysteine 232. The ShKT domain occupies 198-234; the sequence is CTNPCPKKISTQLPRFGPQAGCQDKQMQSDCSATCFC.

The protein belongs to the CRISP family. Expressed by the venom gland.

It localises to the secreted. Functionally, weakly blocks contraction of smooth muscle elicited by high potassium-induced depolarization, but does not block caffeine-stimulated contraction. May target voltage-gated calcium channels on smooth muscle. This Sistrurus catenatus edwardsii (Desert massasauga) protein is Cysteine-rich venom protein 2.